The chain runs to 240 residues: Glutathione S-transferase theta-1 (240 aa).

The region spanning 2 to 82 (VLELYLDLLS…YLAHKYKVPD (81 aa)) is the GST N-terminal domain. Glutathione contacts are provided by residues His40, 53-54 (RV), and 66-67 (ES). The 135-residue stretch at 88-222 (DLQARARVDE…VILKVKDCPP (135 aa)) folds into the GST C-terminal domain.

This sequence belongs to the GST superfamily. Theta family. In terms of assembly, homodimer. In liver, highest expression found in central vein limiting plate hepatocytes. Also expressed in interlobular bile duct epithelial cells. In lung, expressed in club cells and ciliated cells of the bronchiolar epithelium and in type II alveolar cells of the lung parenchyma.

Its subcellular location is the cytoplasm. The protein resides in the nucleus. The catalysed reaction is RX + glutathione = an S-substituted glutathione + a halide anion + H(+). Functionally, conjugation of reduced glutathione to a wide number of exogenous and endogenous hydrophobic electrophiles. Also binds steroids, bilirubin, carcinogens and numerous organic anions. Has dichloromethane dehalogenase activity. This is Glutathione S-transferase theta-1 (Gstt1) from Mus musculus (Mouse).